A 590-amino-acid chain; its full sequence is Probable lysosomal cobalamin transporter (590 aa).

The next 10 helical transmembrane spans lie at 8–28 (LIWV…SIFI), 46–66 (IFTL…VALV), 94–114 (AVAY…VVPF), 145–165 (TVAF…VPIG), 190–210 (ALTF…VLYT), 314–334 (LLSG…MLLT), 348–367 (CGYI…VFVH), 376–396 (YILF…GIAT), 421–441 (ITTV…SMVV), and 508–528 (FFGI…LLVF). The tract at residues 567–590 (WEDITGRASRSPQVSGSAGRGTRE) is disordered.

Belongs to the LIMR family. LMBRD1 subfamily.

Its subcellular location is the lysosome membrane. Probable lysosomal cobalamin transporter. Required to export cobalamin from lysosomes allowing its conversion to cofactors. This Ajellomyces capsulatus (strain NAm1 / WU24) (Darling's disease fungus) protein is Probable lysosomal cobalamin transporter.